Consider the following 347-residue polypeptide: KIN17-like protein KLP (347 aa).

Positions 222–225 (KRKR) match the Nuclear localization signal (NLS) motif.

The protein belongs to the KIN17 family.

The protein localises to the cytoplasm. The protein resides in the nucleus. Functionally, may act as repressor of root growth during copper excess and of hypocotyl growth in the dark. The chain is KIN17-like protein KLP from Arabidopsis thaliana (Mouse-ear cress).